Consider the following 605-residue polypeptide: Zinc metalloproteinase nas-34 (605 aa).

The N-terminal stretch at 1–19 (MVSYWPVLIVLCLLPICHA) is a signal peptide. Positions 20 to 124 (KSYFADFVNG…EFLYAIRGKR (105 aa)) are excised as a propeptide. The Peptidase M12A domain maps to 124 to 322 (RSMTSFLSER…VKRINFAYCN (199 aa)). Intrachain disulfides connect Cys-165-Cys-321 and Cys-191-Cys-211. His-219 provides a ligand contact to Zn(2+). Residue Glu-220 is part of the active site. The Zn(2+) site is built by His-223 and His-229. One can recognise an EGF-like domain in the interval 317–357 (NFAYCNSTCSNYLDCQNGGYINPNDCNNCKCPPGFGGQLCD). Residue Asn-322 is glycosylated (N-linked (GlcNAc...) asparagine). Disulfide bonds link Cys-325/Cys-345, Cys-347/Cys-356, Cys-366/Cys-388, and Cys-415/Cys-436. The CUB domain occupies 366 to 469 (CGAGDITATS…ARFSLNYRYD (104 aa)). The segment at 479-526 (TTTSTTTTTAPITVPTVSPTTTTTRQTTTTARTSTTTTTTQAPPTTTT) is disordered. The TSP type-1 domain occupies 525–566 (TTSTSQCASWSACSAQCGGCGTQSRRCGTYVETVYCNTNPCT). Intrachain disulfides connect Cys-531/Cys-551, Cys-537/Cys-560, and Cys-541/Cys-565.

Requires Zn(2+) as cofactor. As to expression, expressed in hypodermal cells. First expressed in the dorsal and lateral surface area of the middle and posterior region of embryos. At later stages, it localizes to lateral surface regions, probably corresponding to hypodermal seam cells. In L1 larvae, it is expressed in seam cells and in a few cells anterior to the nerve ring.

Its subcellular location is the secreted. Metalloprotease. Required for normal hatching and migration of neuroblasts. May act by degrading eggshell proteins at hatching. The polypeptide is Zinc metalloproteinase nas-34 (hch-1) (Caenorhabditis elegans).